The following is a 135-amino-acid chain: Large ribosomal subunit protein eL32 (135 aa).

A Glycyl lysine isopeptide (Lys-Gly) (interchain with G-Cter in SUMO2) cross-link involves residue lysine 9. At lysine 50 the chain carries N6-succinyllysine. A Phosphoserine modification is found at serine 62.

This sequence belongs to the eukaryotic ribosomal protein eL32 family. Component of the large ribosomal subunit.

It is found in the cytoplasm. Its function is as follows. Component of the large ribosomal subunit. The ribosome is a large ribonucleoprotein complex responsible for the synthesis of proteins in the cell. The protein is Large ribosomal subunit protein eL32 (RPL32) of Macaca fascicularis (Crab-eating macaque).